The chain runs to 294 residues: Cytidine deaminase (294 aa).

CMP/dCMP-type deaminase domains are found at residues 48 to 168 (DEDA…FGPK) and 186 to 294 (LTGD…VLLG). 89–91 (NME) provides a ligand contact to substrate. Position 102 (histidine 102) interacts with Zn(2+). Glutamate 104 functions as the Proton donor in the catalytic mechanism. Positions 129 and 132 each coordinate Zn(2+).

This sequence belongs to the cytidine and deoxycytidylate deaminase family. Homodimer. Zn(2+) is required as a cofactor.

The enzyme catalyses cytidine + H2O + H(+) = uridine + NH4(+). It carries out the reaction 2'-deoxycytidine + H2O + H(+) = 2'-deoxyuridine + NH4(+). This enzyme scavenges exogenous and endogenous cytidine and 2'-deoxycytidine for UMP synthesis. The sequence is that of Cytidine deaminase from Escherichia fergusonii (strain ATCC 35469 / DSM 13698 / CCUG 18766 / IAM 14443 / JCM 21226 / LMG 7866 / NBRC 102419 / NCTC 12128 / CDC 0568-73).